The primary structure comprises 876 residues: GRB2-associated and regulator of MAPK protein 1 (876 aa).

The interval 12–320 (KDVKWSSVAV…HLVKGESWPE (309 aa)) is CABIT. Tyrosine 105 and tyrosine 453 each carry phosphotyrosine. The segment at 496–572 (IPGTLGAAVK…SPSPTLSYYS (77 aa)) is disordered. Residues 498–550 (GTLGAAVKSSDTALPPPPVPPKSEAVREECRLLNAPPVPPRSAKPLSTSPSIP) form a necessary for interaction with GRB2 region. Residues 558 to 572 (RQQTRSPSPTLSYYS) are compositionally biased toward polar residues. 2 positions are modified to phosphoserine: serine 610 and serine 614. Disordered stretches follow at residues 626–664 (WPNH…PKRN) and 738–763 (ASET…PDLS). Composition is skewed to polar residues over residues 631 to 640 (SGASESQTRS) and 648 to 658 (RSYSYPRQKTP). The 66-residue stretch at 811–876 (LSIEEVSKSL…QFINGWRPKI (66 aa)) folds into the SAM domain.

This sequence belongs to the GAREM family. In terms of assembly, isoform 1 interacts with EGFR. Isoform 1 interacts (via proline-rich domain and phosphorylated at Tyr-105 and Tyr-453) with GRB2 (via SH3 domains); the interaction occurs upon EGF stimulation. Isoform 1 interacts (phosphorylated at Tyr-453) with PTPN11; the interaction increases MAPK/ERK activity and does not affect the GRB2/SOS complex formation. Isoform 2 does not interact with GRB2. Post-translationally, on EGF stimulation, phosphorylated on Tyr-105 and Tyr-453. As to expression, isoform 1 is ubiquitously expressed.

Its function is as follows. Acts as an adapter protein that plays a role in intracellular signaling cascades triggered either by the cell surface activated epidermal growth factor receptor and/or cytoplasmic protein tyrosine kinases. Promotes activation of the MAPK/ERK signaling pathway. Plays a role in the regulation of cell proliferation. The polypeptide is GRB2-associated and regulator of MAPK protein 1 (GAREM1) (Homo sapiens (Human)).